Reading from the N-terminus, the 425-residue chain is Homogentisate 1,2-dioxygenase (425 aa).

Residue histidine 283 is the Proton acceptor of the active site. Fe cation contacts are provided by histidine 326 and glutamate 332. The homogentisate site is built by tyrosine 341 and histidine 362. Position 362 (histidine 362) interacts with Fe cation.

It belongs to the homogentisate dioxygenase family. Hexamer; dimer of trimers. Fe cation serves as cofactor.

It catalyses the reaction homogentisate + O2 = 4-maleylacetoacetate + H(+). The protein operates within amino-acid degradation; L-phenylalanine degradation; acetoacetate and fumarate from L-phenylalanine: step 4/6. Its function is as follows. Involved in the catabolism of homogentisate (2,5-dihydroxyphenylacetate or 2,5-OH-PhAc), a central intermediate in the degradation of phenylalanine and tyrosine. Catalyzes the oxidative ring cleavage of the aromatic ring of homogentisate to yield maleylacetoacetate. In Caulobacter vibrioides (strain ATCC 19089 / CIP 103742 / CB 15) (Caulobacter crescentus), this protein is Homogentisate 1,2-dioxygenase.